We begin with the raw amino-acid sequence, 101 residues long: Large ribosomal subunit protein uL23 (101 aa).

Belongs to the universal ribosomal protein uL23 family. In terms of assembly, part of the 50S ribosomal subunit. Contacts protein L29, and trigger factor when it is bound to the ribosome.

In terms of biological role, one of the early assembly proteins it binds 23S rRNA. One of the proteins that surrounds the polypeptide exit tunnel on the outside of the ribosome. Forms the main docking site for trigger factor binding to the ribosome. This Corynebacterium glutamicum (strain R) protein is Large ribosomal subunit protein uL23.